The primary structure comprises 245 residues: Phycoerythrobilin:ferredoxin oxidoreductase (245 aa).

It belongs to the HY2 family.

The enzyme catalyses (3Z)-phycoerythrobilin + oxidized 2[4Fe-4S]-[ferredoxin] = 15,16-dihydrobiliverdin + reduced 2[4Fe-4S]-[ferredoxin] + 2 H(+). In terms of biological role, catalyzes the two-electron reduction of the C2 and C3(1) diene system of 15,16-dihydrobiliverdin. The polypeptide is Phycoerythrobilin:ferredoxin oxidoreductase (pebB) (Gloeobacter violaceus (strain ATCC 29082 / PCC 7421)).